The following is a 108-amino-acid chain: Protein S100-A15A (108 aa).

One can recognise an EF-hand domain in the interval 53-88; it reads KEPYYITELFQAADKNKDNQICFDEFLYILGKLVKD. Ca(2+)-binding residues include D66, N68, D70, Q72, and E77.

The protein belongs to the S-100 family.

In Pongo abelii (Sumatran orangutan), this protein is Protein S100-A15A (S100A15A).